A 276-amino-acid polypeptide reads, in one-letter code: Bis(5'-nucleosyl)-tetraphosphatase, symmetrical (276 aa).

The protein belongs to the Ap4A hydrolase family.

It carries out the reaction P(1),P(4)-bis(5'-adenosyl) tetraphosphate + H2O = 2 ADP + 2 H(+). In terms of biological role, hydrolyzes diadenosine 5',5'''-P1,P4-tetraphosphate to yield ADP. This chain is Bis(5'-nucleosyl)-tetraphosphatase, symmetrical, found in Tolumonas auensis (strain DSM 9187 / NBRC 110442 / TA 4).